Here is a 31-residue protein sequence, read N- to C-terminus: Photosystem II reaction center protein T (31 aa).

Residues 3 to 23 form a helical membrane-spanning segment; that stretch reads SFAYILILTLAIATLFFAIAF.

The protein belongs to the PsbT family. As to quaternary structure, PSII is composed of 1 copy each of membrane proteins PsbA, PsbB, PsbC, PsbD, PsbE, PsbF, PsbH, PsbI, PsbJ, PsbK, PsbL, PsbM, PsbT, PsbX, PsbY, PsbZ, Psb30/Ycf12, peripheral proteins PsbO, CyanoQ (PsbQ), PsbU, PsbV and a large number of cofactors. It forms dimeric complexes.

The protein localises to the cellular thylakoid membrane. In terms of biological role, found at the monomer-monomer interface of the photosystem II (PS II) dimer, plays a role in assembly and dimerization of PSII. PSII is a light-driven water plastoquinone oxidoreductase, using light energy to abstract electrons from H(2)O, generating a proton gradient subsequently used for ATP formation. The polypeptide is Photosystem II reaction center protein T (Synechococcus sp. (strain WH7803)).